Here is a 156-residue protein sequence, read N- to C-terminus: Longistatin (156 aa).

Residues 1-21 (MTHRRLLWALCVAALLGVVAA) form the signal peptide. EF-hand domains are found at residues 70-105 (SQDE…TNHH) and 123-156 (DIAS…TNQI). Residues Asp-83, Asp-85, Asn-87, Lys-89, Glu-94, Asp-135, Asn-137, Asp-139, Phe-141, and Glu-146 each contribute to the Ca(2+) site.

In terms of assembly, interacts with host fibrin. Interacts with human RAGE/AGER. In terms of tissue distribution, saliva (at protein level). Salivary gland (at protein level). Not detected in midgut, ovary, trachea, Malpighian tubule system, synganglion and cuticle.

It is found in the secreted. It localises to the cytoplasm. Its activity is regulated as follows. Resistant to inhibition by host SERPINE1. Inhibited by PMSF, aprotinin, antipain and leupeptin. Inhibited by Zn(2+). In terms of biological role, anticoagulant and fibrinolytic protease that modulates blood feeding of ticks on vertebrate hosts. Degrades host fibrinogen and delays fibrin clot formation. Promotes lysis of fibrin clots in the host by activating host plasminogen in the presence of soluble fibrin. Binds Ca(2+). Hydrolyzes serine protease-specific substrates. Required for the formation of a blood pool, an accumulation of blood and tissue fluid developed at the tick's feeding site. Blocks activation of host AGER/RAGE. Reduces AGER/RAGE-dependent production of reactive oxygen species (ROS) in human endothelial cells. Prevents AGER/RAGE-dependent activation of NF-kappa-B and suppresses expression of adhesion molecules, such as VCAM1, ICAM1 and SELE, and secretion of cytokines, such as CSF3/GCSF and TGF-beta, in human endothelial cells. Suppresses RAGE/AGER-mediated migration of mouse peritoneal resident cells. Reduces AGER/RAGE-mediated inflammation in mice tissues. The polypeptide is Longistatin (Haemaphysalis longicornis (Bush tick)).